The following is a 583-amino-acid chain: Proline--tRNA ligase (583 aa).

It belongs to the class-II aminoacyl-tRNA synthetase family. ProS type 1 subfamily. In terms of assembly, homodimer.

Its subcellular location is the cytoplasm. It carries out the reaction tRNA(Pro) + L-proline + ATP = L-prolyl-tRNA(Pro) + AMP + diphosphate. Functionally, catalyzes the attachment of proline to tRNA(Pro) in a two-step reaction: proline is first activated by ATP to form Pro-AMP and then transferred to the acceptor end of tRNA(Pro). As ProRS can inadvertently accommodate and process non-cognate amino acids such as alanine and cysteine, to avoid such errors it has two additional distinct editing activities against alanine. One activity is designated as 'pretransfer' editing and involves the tRNA(Pro)-independent hydrolysis of activated Ala-AMP. The other activity is designated 'posttransfer' editing and involves deacylation of mischarged Ala-tRNA(Pro). The misacylated Cys-tRNA(Pro) is not edited by ProRS. The chain is Proline--tRNA ligase from Aromatoleum aromaticum (strain DSM 19018 / LMG 30748 / EbN1) (Azoarcus sp. (strain EbN1)).